The sequence spans 166 residues: Large ribosomal subunit protein uL10 (166 aa).

Belongs to the universal ribosomal protein uL10 family. Part of the ribosomal stalk of the 50S ribosomal subunit. The N-terminus interacts with L11 and the large rRNA to form the base of the stalk. The C-terminus forms an elongated spine to which L12 dimers bind in a sequential fashion forming a multimeric L10(L12)X complex.

Forms part of the ribosomal stalk, playing a central role in the interaction of the ribosome with GTP-bound translation factors. This chain is Large ribosomal subunit protein uL10, found in Pseudomonas fluorescens (strain ATCC BAA-477 / NRRL B-23932 / Pf-5).